The sequence spans 148 residues: Azurin (148 aa).

Residues 1 to 18 (MRNQLLFALAFIPTIAAA) form the signal peptide. The Plastocyanin-like domain maps to 19-148 (ASNCEVNVSA…MMRGTVKLVD (130 aa)). Residues cysteine 22 and cysteine 45 are joined by a disulfide bond. 4 residues coordinate Cu cation: histidine 65, cysteine 131, histidine 136, and methionine 140.

The protein localises to the periplasm. It functions in the pathway one-carbon metabolism; methylamine degradation. Probable electron acceptor for methylamine dehydrogenase. The protein is Azurin (azu) of Methylobacillus flagellatus (strain ATCC 51484 / DSM 6875 / VKM B-1610 / KT).